Consider the following 92-residue polypeptide: Small ribosomal subunit protein uS19 (92 aa).

Belongs to the universal ribosomal protein uS19 family.

Protein S19 forms a complex with S13 that binds strongly to the 16S ribosomal RNA. This Bifidobacterium longum subsp. infantis (strain ATCC 15697 / DSM 20088 / JCM 1222 / NCTC 11817 / S12) protein is Small ribosomal subunit protein uS19.